The sequence spans 1083 residues: MPRRDDIKKILLIGSGPIVIGQACEFDYSGTQACKALREEGYEVVLVNSNPATIMTDPATADATYIEPLTWQIVEKVIAKERPDALLPTLGGQTGLNVAMDLDANGVLEKYGVEMIAANAKVIAKAEEREQFKQAMDKIGLDVCKGFTVRTLADARKALAEVGLPAVVRPSFTMGGSGSAIAYNKDDFDSLVQNGLDQSPVTEVLIEESIIGWKEYEMEVMRDCDDNVVIICAIENFDPMGVHTGDSITVAPAQTLSDKEYQRMRDASLAVIREIGVETGGSNIQFAIEPDTGRMIVIEMNPRVSRSSALASKATGFPIAKIAAKLAVGYRLWELPNDITQKTKACFEPTIDYVVTKMPRFAFEKFPEADATLTTQMKSVGETMSIGRTFQESFQKALRGLEVGAFGFGSDPKDLWGTEDQPSRDEIRAKLSTPGSERVFYIRYAFKDGMTAAEIHSLTNIDPWFLDHLQQLIETEDNLRAIGKLDAIDVDTMRDAKRRGFSDRQIATITSKTESQVRAKRLEMGIRPVYKSVDTCAAEFEAFTPYYYSTYESETEVPAKGDKKRVVILGGGPNRIGQGIEFDYCCCHASFALQEMGIESIMVNSNPETVSTDYDTSDILFFEPLTIEDVLNICDAMQPDGVIVQFGGQTPLNLARGLEQAGVPIIGTSVDTIDTAEDRELFSSLIDELGLRQPPSGIARNMDEARVEAKRIGYPALVRPSFVLGGRAMEICYDHSQFARYVAEAFIVADGQPVLIDRFLEDATEVDVDAISDGNDCVIMGIMEHIEEAGVHSGDSACCIPPFSLTQPVLAEIRDATRKLAARLNVVGLMNIQFAVKMEGTQPTLYILEVNPRASRTVPFVAKATGVPVANLATKVMAGKTLKELNVTEEPIPRHVSIKESVLPFRKFAGVDIVLGPEMRSTGEVMGVSELFSIAFAKSQLAAGTVLPESGKIFLSLSANHKEAAESLGKSLIELGFELLATEGTAVRLEANGIAVTRVKKLSEGHPNLIDYLKNDDVQLILNTPSGKGARTDEGKIRAAGVQHGVPCITTLAAAEAAVRAMVAMRDTPMEVESLQRRYAQNV.

Residues 1–402 (MPRRDDIKKI…SFQKALRGLE (402 aa)) are carboxyphosphate synthetic domain. ATP is bound by residues R129, R169, G175, G176, E208, I210, E215, G241, V242, H243, Q285, and E299. The 196-residue stretch at 133–328 (KQAMDKIGLD…IAKIAAKLAV (196 aa)) folds into the ATP-grasp 1 domain. 3 residues coordinate Mg(2+): Q285, E299, and N301. Mn(2+) is bound by residues Q285, E299, and N301. Positions 403–557 (VGAFGFGSDP…YSTYESETEV (155 aa)) are oligomerization domain. The interval 558–944 (PAKGDKKRVV…AFAKSQLAAG (387 aa)) is carbamoyl phosphate synthetic domain. The 196-residue stretch at 683-878 (SSLIDELGLR…VANLATKVMA (196 aa)) folds into the ATP-grasp 2 domain. Residues R719, R758, L760, E765, G790, V791, H792, S793, Q833, and E849 each contribute to the ATP site. Residues Q833, E849, and N851 each coordinate Mg(2+). Positions 833, 849, and 851 each coordinate Mn(2+). The MGS-like domain occupies 945 to 1083 (TVLPESGKIF…SLQRRYAQNV (139 aa)). The allosteric domain stretch occupies residues 945 to 1083 (TVLPESGKIF…SLQRRYAQNV (139 aa)).

This sequence belongs to the CarB family. As to quaternary structure, composed of two chains; the small (or glutamine) chain promotes the hydrolysis of glutamine to ammonia, which is used by the large (or ammonia) chain to synthesize carbamoyl phosphate. Tetramer of heterodimers (alpha,beta)4. Mg(2+) is required as a cofactor. Mn(2+) serves as cofactor.

It catalyses the reaction hydrogencarbonate + L-glutamine + 2 ATP + H2O = carbamoyl phosphate + L-glutamate + 2 ADP + phosphate + 2 H(+). The catalysed reaction is hydrogencarbonate + NH4(+) + 2 ATP = carbamoyl phosphate + 2 ADP + phosphate + 2 H(+). It functions in the pathway amino-acid biosynthesis; L-arginine biosynthesis; carbamoyl phosphate from bicarbonate: step 1/1. Its pathway is pyrimidine metabolism; UMP biosynthesis via de novo pathway; (S)-dihydroorotate from bicarbonate: step 1/3. Large subunit of the glutamine-dependent carbamoyl phosphate synthetase (CPSase). CPSase catalyzes the formation of carbamoyl phosphate from the ammonia moiety of glutamine, carbonate, and phosphate donated by ATP, constituting the first step of 2 biosynthetic pathways, one leading to arginine and/or urea and the other to pyrimidine nucleotides. The large subunit (synthetase) binds the substrates ammonia (free or transferred from glutamine from the small subunit), hydrogencarbonate and ATP and carries out an ATP-coupled ligase reaction, activating hydrogencarbonate by forming carboxy phosphate which reacts with ammonia to form carbamoyl phosphate. The protein is Carbamoyl phosphate synthase large chain of Rhodopirellula baltica (strain DSM 10527 / NCIMB 13988 / SH1).